The following is a 179-amino-acid chain: Putative ADP-ribosylation factor-like protein 5C (179 aa).

Gly-2 carries N-myristoyl glycine lipidation. GTP-binding positions include 23-30 (GLDNEGKT), 66-70 (DIVRP), and 125-128 (NKQD).

The protein belongs to the small GTPase superfamily. Arf family.

Functionally, binds and exchanges GTP and GDP. The protein is Putative ADP-ribosylation factor-like protein 5C (ARL5C) of Homo sapiens (Human).